Reading from the N-terminus, the 38-residue chain is Large ribosomal subunit protein bL36 (38 aa).

This sequence belongs to the bacterial ribosomal protein bL36 family.

This Prochlorococcus marinus (strain SARG / CCMP1375 / SS120) protein is Large ribosomal subunit protein bL36.